We begin with the raw amino-acid sequence, 162 residues long: 6,7-dimethyl-8-ribityllumazine synthase (162 aa).

Residues Phe22, 56-58, and 80-82 contribute to the 5-amino-6-(D-ribitylamino)uracil site; these read TFE and AVI. Position 85-86 (85-86) interacts with (2S)-2-hydroxy-3-oxobutyl phosphate; it reads GT. Catalysis depends on His88, which acts as the Proton donor. Met113 is a binding site for 5-amino-6-(D-ribitylamino)uracil. Arg127 is a (2S)-2-hydroxy-3-oxobutyl phosphate binding site.

Belongs to the DMRL synthase family.

The catalysed reaction is (2S)-2-hydroxy-3-oxobutyl phosphate + 5-amino-6-(D-ribitylamino)uracil = 6,7-dimethyl-8-(1-D-ribityl)lumazine + phosphate + 2 H2O + H(+). It functions in the pathway cofactor biosynthesis; riboflavin biosynthesis; riboflavin from 2-hydroxy-3-oxobutyl phosphate and 5-amino-6-(D-ribitylamino)uracil: step 1/2. In terms of biological role, catalyzes the formation of 6,7-dimethyl-8-ribityllumazine by condensation of 5-amino-6-(D-ribitylamino)uracil with 3,4-dihydroxy-2-butanone 4-phosphate. This is the penultimate step in the biosynthesis of riboflavin. The protein is 6,7-dimethyl-8-ribityllumazine synthase of Anaeromyxobacter dehalogenans (strain 2CP-1 / ATCC BAA-258).